The following is a 265-amino-acid chain: Hydroxyethylthiazole kinase (265 aa).

Met50 is a substrate binding site. ATP-binding residues include Arg125 and Thr171. Gly198 lines the substrate pocket.

This sequence belongs to the Thz kinase family. It depends on Mg(2+) as a cofactor.

The catalysed reaction is 5-(2-hydroxyethyl)-4-methylthiazole + ATP = 4-methyl-5-(2-phosphooxyethyl)-thiazole + ADP + H(+). The protein operates within cofactor biosynthesis; thiamine diphosphate biosynthesis; 4-methyl-5-(2-phosphoethyl)-thiazole from 5-(2-hydroxyethyl)-4-methylthiazole: step 1/1. Its function is as follows. Catalyzes the phosphorylation of the hydroxyl group of 4-methyl-5-beta-hydroxyethylthiazole (THZ). The polypeptide is Hydroxyethylthiazole kinase (Salmonella paratyphi A (strain ATCC 9150 / SARB42)).